The sequence spans 80 residues: Kappa-actitoxin-Avd4f (80 aa).

The signal sequence occupies residues 1–19 (MNKALFLCLVVLCAAVVFA). A propeptide spanning residues 20–31 (AEDLQKAKHAPF) is cleaved from the precursor. 3 disulfide bridges follow: Cys41–Cys76, Cys43–Cys69, and Cys59–Cys77.

It belongs to the sea anemone type 3 (BDS) potassium channel toxin family. In terms of tissue distribution, moderately expressed in the ectodermal tissue from the distal and proximal tentacles, body wall, and oral disk.

It is found in the secreted. Its subcellular location is the nematocyst. Functionally, blocks Kv3 voltage-gated potassium channels. Reduces blood pressure. The sequence is that of Kappa-actitoxin-Avd4f from Anemonia viridis (Snakelocks anemone).